The primary structure comprises 242 residues: Probable septum site-determining protein MinC (242 aa).

Over residues 120–135 (APKKVEEKPAEPEHKP) the composition is skewed to basic and acidic residues. The disordered stretch occupies residues 120 to 144 (APKKVEEKPAEPEHKPSRIVTSPVR).

Belongs to the MinC family. Interacts with MinD and FtsZ.

In terms of biological role, cell division inhibitor that blocks the formation of polar Z ring septums. Rapidly oscillates between the poles of the cell to destabilize FtsZ filaments that have formed before they mature into polar Z rings. Prevents FtsZ polymerization. This is Probable septum site-determining protein MinC from Ectopseudomonas mendocina (strain ymp) (Pseudomonas mendocina).